We begin with the raw amino-acid sequence, 284 residues long: uncharacterized protein (284 aa).

Helical transmembrane passes span Leu-174–Ile-194, Met-217–Ala-237, and Leu-241–Cys-261.

The protein localises to the membrane. This is an uncharacterized protein from Saccharomyces cerevisiae (strain ATCC 204508 / S288c) (Baker's yeast).